A 305-amino-acid chain; its full sequence is Phosphoribosylaminoimidazole-succinocarboxamide synthase (305 aa).

The protein belongs to the SAICAR synthetase family.

It catalyses the reaction 5-amino-1-(5-phospho-D-ribosyl)imidazole-4-carboxylate + L-aspartate + ATP = (2S)-2-[5-amino-1-(5-phospho-beta-D-ribosyl)imidazole-4-carboxamido]succinate + ADP + phosphate + 2 H(+). The protein operates within purine metabolism; IMP biosynthesis via de novo pathway; 5-amino-1-(5-phospho-D-ribosyl)imidazole-4-carboxamide from 5-amino-1-(5-phospho-D-ribosyl)imidazole-4-carboxylate: step 1/2. The chain is Phosphoribosylaminoimidazole-succinocarboxamide synthase from Albidiferax ferrireducens (strain ATCC BAA-621 / DSM 15236 / T118) (Rhodoferax ferrireducens).